We begin with the raw amino-acid sequence, 500 residues long: E3 ubiquitin-protein ligase TRIM4 (500 aa).

The segment at 12–53 adopts an RING-type zinc-finger fold; the sequence is CPICLDYFQDPVSIECGHNFCRGCLHRNWAPGGGPFPCPECR. A B box-type zinc finger spans residues 82-123; that stretch reads VPPGLCGRHWEPLRLFCEDDQRPVCLVCRESQEHQTHAMAPI. Zn(2+)-binding residues include C87, H90, C109, and H115. The stretch at 212–253 forms a coiled coil; that stretch reads EEEDLFLQRLNKEEEETKKKLNENTLKLNQTIASLKKLILEV. Residues 288–500 enclose the B30.2/SPRY domain; it reads KVKTVCQIPL…LVIPPVTDRK (213 aa).

This sequence belongs to the TRIM/RBCC family. In terms of assembly, homotrimer.

The protein resides in the cytoplasm. The catalysed reaction is S-ubiquitinyl-[E2 ubiquitin-conjugating enzyme]-L-cysteine + [acceptor protein]-L-lysine = [E2 ubiquitin-conjugating enzyme]-L-cysteine + N(6)-ubiquitinyl-[acceptor protein]-L-lysine.. It participates in protein modification; protein ubiquitination. E3 ubiquitin-protein ligase. Mediates 'Lys-63'-linked polyubiquitination of the innate immune receptor RIGI, this linkage doesn't lead to proteasomal degradation but seems to enhance IFN induction. This Homo sapiens (Human) protein is E3 ubiquitin-protein ligase TRIM4 (TRIM4).